The chain runs to 312 residues: Malate dehydrogenase (312 aa).

Residues 7–13 and Asp-34 contribute to the NAD(+) site; that span reads GAAGGIG. Substrate-binding residues include Arg-81 and Arg-87. NAD(+) contacts are provided by residues Asn-94 and 117 to 119; that span reads ITN. Residues Asn-119 and Arg-153 each contribute to the substrate site. His-177 serves as the catalytic Proton acceptor. Met-227 provides a ligand contact to NAD(+).

It belongs to the LDH/MDH superfamily. MDH type 1 family. Homodimer.

It catalyses the reaction (S)-malate + NAD(+) = oxaloacetate + NADH + H(+). Functionally, catalyzes the reversible oxidation of malate to oxaloacetate. In Salmonella gallinarum (strain 287/91 / NCTC 13346), this protein is Malate dehydrogenase.